A 176-amino-acid chain; its full sequence is uncharacterized protein (176 aa).

This is an uncharacterized protein from Aquifex aeolicus (strain VF5).